Reading from the N-terminus, the 474-residue chain is Glutathione synthetase (474 aa).

Position 2 is an N-acetylalanine (Ala2). Arg125 contacts substrate. An ATP-binding site is contributed by Glu144. Residues Glu144 and Asn146 each coordinate Mg(2+). Substrate contacts are provided by residues 148-151 (ISAS), 214-216 (ERN), Gln220, and 267-270 (RDGY). ATP contacts are provided by residues Lys305, 364–373 (KPQREGGGNN), Tyr375, and 398–401 (MEKI). Residue Glu368 coordinates Mg(2+). Position 415 is a phosphoserine (Ser415). Position 425 (Glu425) interacts with ATP. Arg450 contributes to the substrate binding site. Residues Lys452 and Asp458 each contribute to the ATP site. 461-462 (VA) is a binding site for substrate.

The protein belongs to the eukaryotic GSH synthase family. As to quaternary structure, homodimer. Mg(2+) is required as a cofactor.

It catalyses the reaction gamma-L-glutamyl-L-cysteine + glycine + ATP = glutathione + ADP + phosphate + H(+). The catalysed reaction is gamma-L-glutamyl-(2S)-2-aminobutanoate + glycine + ATP = ophthalmate + ADP + phosphate + H(+). It functions in the pathway sulfur metabolism; glutathione biosynthesis; glutathione from L-cysteine and L-glutamate: step 2/2. Functionally, catalyzes the production of glutathione from gamma-glutamylcysteine and glycine in an ATP-dependent manner. Glutathione (gamma-glutamylcysteinylglycine, GSH) is the most abundant intracellular thiol in living aerobic cells and is required for numerous processes including the protection of cells against oxidative damage, amino acid transport, the detoxification of foreign compounds, the maintenance of protein sulfhydryl groups in a reduced state and acts as a cofactor for a number of enzymes. Participates in ophthalmate biosynthesis in hepatocytes. The protein is Glutathione synthetase of Rattus norvegicus (Rat).